The following is a 170-amino-acid chain: Probable inosine/xanthosine triphosphatase (170 aa).

7–12 lines the substrate pocket; it reads TTNPVK. Asp37 provides a ligand contact to Mg(2+).

Belongs to the YjjX NTPase family. As to quaternary structure, homodimer. Mg(2+) is required as a cofactor. It depends on Mn(2+) as a cofactor.

The enzyme catalyses XTP + H2O = XDP + phosphate + H(+). It carries out the reaction ITP + H2O = IDP + phosphate + H(+). Its function is as follows. Phosphatase that hydrolyzes non-canonical purine nucleotides such as XTP and ITP to their respective diphosphate derivatives. Probably excludes non-canonical purines from DNA/RNA precursor pool, thus preventing their incorporation into DNA/RNA and avoiding chromosomal lesions. This chain is Probable inosine/xanthosine triphosphatase, found in Methanopyrus kandleri (strain AV19 / DSM 6324 / JCM 9639 / NBRC 100938).